The sequence spans 642 residues: Threonine--tRNA ligase (642 aa).

In terms of domain architecture, TGS spans 1-61 (MPVITLPDGS…ENDATLSIIT (61 aa)). The interval 243-534 (DHRKIGKQLD…LTEEFAGFFP (292 aa)) is catalytic. 3 residues coordinate Zn(2+): Cys-334, His-385, and His-511.

Belongs to the class-II aminoacyl-tRNA synthetase family. In terms of assembly, homodimer. It depends on Zn(2+) as a cofactor.

The protein resides in the cytoplasm. The catalysed reaction is tRNA(Thr) + L-threonine + ATP = L-threonyl-tRNA(Thr) + AMP + diphosphate + H(+). Catalyzes the attachment of threonine to tRNA(Thr) in a two-step reaction: L-threonine is first activated by ATP to form Thr-AMP and then transferred to the acceptor end of tRNA(Thr). Also edits incorrectly charged L-seryl-tRNA(Thr). This Salmonella agona (strain SL483) protein is Threonine--tRNA ligase.